Here is a 90-residue protein sequence, read N- to C-terminus: Elongation factor 1-beta (90 aa).

Belongs to the EF-1-beta/EF-1-delta family.

Functionally, promotes the exchange of GDP for GTP in EF-1-alpha/GDP, thus allowing the regeneration of EF-1-alpha/GTP that could then be used to form the ternary complex EF-1-alpha/GTP/AAtRNA. In Sulfolobus acidocaldarius (strain ATCC 33909 / DSM 639 / JCM 8929 / NBRC 15157 / NCIMB 11770), this protein is Elongation factor 1-beta.